A 290-amino-acid chain; its full sequence is Lipoyl synthase (290 aa).

[4Fe-4S] cluster contacts are provided by cysteine 34, cysteine 39, cysteine 45, cysteine 60, cysteine 64, cysteine 67, and serine 273. Residues 46-262 enclose the Radical SAM core domain; that stretch reads WNKRHATVMI…KYIAYSKGFL (217 aa).

This sequence belongs to the radical SAM superfamily. Lipoyl synthase family. It depends on [4Fe-4S] cluster as a cofactor.

It is found in the cytoplasm. It catalyses the reaction [[Fe-S] cluster scaffold protein carrying a second [4Fe-4S](2+) cluster] + N(6)-octanoyl-L-lysyl-[protein] + 2 oxidized [2Fe-2S]-[ferredoxin] + 2 S-adenosyl-L-methionine + 4 H(+) = [[Fe-S] cluster scaffold protein] + N(6)-[(R)-dihydrolipoyl]-L-lysyl-[protein] + 4 Fe(3+) + 2 hydrogen sulfide + 2 5'-deoxyadenosine + 2 L-methionine + 2 reduced [2Fe-2S]-[ferredoxin]. The protein operates within protein modification; protein lipoylation via endogenous pathway; protein N(6)-(lipoyl)lysine from octanoyl-[acyl-carrier-protein]: step 2/2. Functionally, catalyzes the radical-mediated insertion of two sulfur atoms into the C-6 and C-8 positions of the octanoyl moiety bound to the lipoyl domains of lipoate-dependent enzymes, thereby converting the octanoylated domains into lipoylated derivatives. In Wolbachia pipientis subsp. Culex pipiens (strain wPip), this protein is Lipoyl synthase.